A 562-amino-acid polypeptide reads, in one-letter code: Putative transport protein PC1_1686 (562 aa).

Helical transmembrane passes span 8–28 (LLNG…LCLG), 32–52 (LGPV…LLGQ), 66–86 (FMLF…SIFF), 93–113 (FMLA…LGKF), 116–136 (WGIG…PVLV), and 158–178 (HLSL…IFGA). RCK C-terminal domains follow at residues 202–288 (LDAD…NFRD) and 292–373 (VFDR…RIGF). 5 helical membrane-spanning segments follow: residues 383 to 403 (LLAF…TIQF), 406 to 426 (FTFG…LGFL), 447 to 467 (FGLM…INSS), 478 to 498 (SGLI…AYVL), and 537 to 557 (GTYA…VIIW).

It belongs to the AAE transporter (TC 2.A.81) family. YbjL subfamily.

It is found in the cell membrane. This chain is Putative transport protein PC1_1686, found in Pectobacterium carotovorum subsp. carotovorum (strain PC1).